The primary structure comprises 670 residues: Probable beta-glucosidase N (670 aa).

The N-terminal stretch at 1–21 is a signal peptide; it reads MHSNILPVLTSVATLLGLVQG. Asn51 is a glycosylation site (N-linked (GlcNAc...) asparagine). Positions 65 to 87 are disordered; the sequence is FEPSDGVRSVQGSGKDYDNPAMR. Residue Asn141 is glycosylated (N-linked (GlcNAc...) asparagine). The active site involves Asp152. Residues Asn184, Asn248, Asn330, and Asn417 are each glycosylated (N-linked (GlcNAc...) asparagine).

It belongs to the glycosyl hydrolase 3 family.

Its subcellular location is the secreted. It catalyses the reaction Hydrolysis of terminal, non-reducing beta-D-glucosyl residues with release of beta-D-glucose.. It participates in glycan metabolism; cellulose degradation. Its function is as follows. Beta-glucosidases are one of a number of cellulolytic enzymes involved in the degradation of cellulosic biomass. Catalyzes the last step releasing glucose from the inhibitory cellobiose. This Emericella nidulans (strain FGSC A4 / ATCC 38163 / CBS 112.46 / NRRL 194 / M139) (Aspergillus nidulans) protein is Probable beta-glucosidase N (bglN).